The following is a 60-amino-acid chain: Small, acid-soluble spore protein H (60 aa).

Belongs to the SspH family.

The protein localises to the spore core. In Bacillus velezensis (strain DSM 23117 / BGSC 10A6 / LMG 26770 / FZB42) (Bacillus amyloliquefaciens subsp. plantarum), this protein is Small, acid-soluble spore protein H.